A 291-amino-acid polypeptide reads, in one-letter code: Small ribosomal subunit protein uS2 (291 aa).

Residues 235-291 form a disordered region; it reads NLQEDEESGDSGVDPYQDREEEITDYSNYTPKDEASGDDEDEEDNSLVNDEDLYDDK. Positions 270 to 291 are enriched in acidic residues; the sequence is SGDDEDEEDNSLVNDEDLYDDK.

The protein belongs to the universal ribosomal protein uS2 family.

This chain is Small ribosomal subunit protein uS2, found in Treponema denticola (strain ATCC 35405 / DSM 14222 / CIP 103919 / JCM 8153 / KCTC 15104).